A 155-amino-acid polypeptide reads, in one-letter code: Alanine- and arginine-rich domain-containing protein (155 aa).

The protein is Alanine- and arginine-rich domain-containing protein (AARD) of Homo sapiens (Human).